Consider the following 241-residue polypeptide: tRNA pseudouridine synthase B (241 aa).

Catalysis depends on aspartate 45, which acts as the Nucleophile.

It belongs to the pseudouridine synthase TruB family. Type 1 subfamily.

The catalysed reaction is uridine(55) in tRNA = pseudouridine(55) in tRNA. In terms of biological role, responsible for synthesis of pseudouridine from uracil-55 in the psi GC loop of transfer RNAs. This is tRNA pseudouridine synthase B from Opitutus terrae (strain DSM 11246 / JCM 15787 / PB90-1).